The primary structure comprises 149 residues: Ribonuclease P protein component (149 aa).

The segment at G123–G149 is disordered. Polar residues predominate over residues P139–G149.

The protein belongs to the RnpA family. As to quaternary structure, consists of a catalytic RNA component (M1 or rnpB) and a protein subunit.

The catalysed reaction is Endonucleolytic cleavage of RNA, removing 5'-extranucleotides from tRNA precursor.. RNaseP catalyzes the removal of the 5'-leader sequence from pre-tRNA to produce the mature 5'-terminus. It can also cleave other RNA substrates such as 4.5S RNA. The protein component plays an auxiliary but essential role in vivo by binding to the 5'-leader sequence and broadening the substrate specificity of the ribozyme. This Caulobacter vibrioides (strain ATCC 19089 / CIP 103742 / CB 15) (Caulobacter crescentus) protein is Ribonuclease P protein component.